Consider the following 444-residue polypeptide: Glutamyl-tRNA reductase (444 aa).

Residues 49-52, S109, 114-116, and Q120 contribute to the substrate site; these read TCNR and ETQ. The Nucleophile role is filled by C50. 189–194 is an NADP(+) binding site; sequence GAGKMS. The segment at 425-444 is disordered; it reads KPKKQPAPAGIKEPVLAKKG.

The protein belongs to the glutamyl-tRNA reductase family. As to quaternary structure, homodimer.

It catalyses the reaction (S)-4-amino-5-oxopentanoate + tRNA(Glu) + NADP(+) = L-glutamyl-tRNA(Glu) + NADPH + H(+). The protein operates within porphyrin-containing compound metabolism; protoporphyrin-IX biosynthesis; 5-aminolevulinate from L-glutamyl-tRNA(Glu): step 1/2. Its function is as follows. Catalyzes the NADPH-dependent reduction of glutamyl-tRNA(Glu) to glutamate 1-semialdehyde (GSA). In Pelotomaculum thermopropionicum (strain DSM 13744 / JCM 10971 / SI), this protein is Glutamyl-tRNA reductase.